Here is a 195-residue protein sequence, read N- to C-terminus: Shikimate kinase (195 aa).

30 to 35 (GAGKTA) provides a ligand contact to ATP. Position 34 (Thr34) interacts with Mg(2+). 3 residues coordinate substrate: Asp52, Arg76, and Gly98. Arg136 is a binding site for ATP. Arg155 provides a ligand contact to substrate.

Belongs to the shikimate kinase family. Monomer. Requires Mg(2+) as cofactor.

The protein resides in the cytoplasm. The catalysed reaction is shikimate + ATP = 3-phosphoshikimate + ADP + H(+). The protein operates within metabolic intermediate biosynthesis; chorismate biosynthesis; chorismate from D-erythrose 4-phosphate and phosphoenolpyruvate: step 5/7. Functionally, catalyzes the specific phosphorylation of the 3-hydroxyl group of shikimic acid using ATP as a cosubstrate. The polypeptide is Shikimate kinase (Ruegeria pomeroyi (strain ATCC 700808 / DSM 15171 / DSS-3) (Silicibacter pomeroyi)).